We begin with the raw amino-acid sequence, 397 residues long: Elongation factor Tu (397 aa).

In terms of domain architecture, tr-type G spans 10-207 (KPHVNIGTIG…AVDESIPDPV (198 aa)). Residues 19 to 26 (GHVDHGKT) form a G1 region. Residue 19–26 (GHVDHGKT) coordinates GTP. A Mg(2+)-binding site is contributed by Thr26. The tract at residues 63–67 (GITIN) is G2. Positions 84–87 (DAPG) are G3. GTP contacts are provided by residues 84 to 88 (DAPGH) and 139 to 142 (NKAD). Positions 139-142 (NKAD) are G4. A G5 region spans residues 177–179 (SGL).

Belongs to the TRAFAC class translation factor GTPase superfamily. Classic translation factor GTPase family. EF-Tu/EF-1A subfamily. In terms of assembly, monomer.

The protein localises to the cytoplasm. The catalysed reaction is GTP + H2O = GDP + phosphate + H(+). Functionally, GTP hydrolase that promotes the GTP-dependent binding of aminoacyl-tRNA to the A-site of ribosomes during protein biosynthesis. The sequence is that of Elongation factor Tu from Tropheryma whipplei (strain Twist) (Whipple's bacillus).